A 527-amino-acid polypeptide reads, in one-letter code: Cytochrome P450 monooygenase 3 (527 aa).

Residues 21-41 form a helical membrane-spanning segment; the sequence is IAVAFAALCGATGLLAFSWWI. Residue Cys-473 coordinates heme.

The protein belongs to the cytochrome P450 family. The cofactor is heme.

The protein resides in the membrane. The protein operates within plant hormone biosynthesis; gibberellin biosynthesis. Functionally, gibberellin 13-hydroxylase; part of the gene cluster that mediates the biosynthesis of gibberellins (GAs), diterpenoids that may provide a selective advantage during infection of the preferred host plant, rice. Gibberellins (GAs) are diterpenoids and are synthesized via the mevalonate pathway. Biosynthesis of the major metabolite GA3 (gibberellic acid) from geranylgeranyl diphosphate (GGPP) requires 13 steps. The GGPP produced by the geranylgeranyl diphosphate synthase GGS2 is converted to ent-kaurene via ent-copalyldiphosphate in a two-step cyclization reaction performed by the bifunctional ent-copalyl diphosphate synthase/ent-kaurene synthase enzyme (CPS/KS). Ent-Kaurene is metabolized to GAs by a series of oxidation reactions catalyzed by cytochrome P450 monooxygenases. Cytochrome P450 monooxygenase P450-4 is an ent-kaurene oxidase that catalyzes the three oxidation steps between ent-kaurene and ent-kaurenoic acid. The highly multifunctional cytochrome P450 monooxygenase P450-1 then catalyzes four steps involving oxidation at two carbon atoms, in the main pathway from ent-kaurenoic acid to GA14 via GA12-aldehyde as well as producing kaurenolides and fujenoic acids as by-products. The cytochrome P450 monooxygenase P450-2 then converts GA14 to GA4 by removal of C-20. GA4 is further converted to GA7 by the GA4 desaturase DES via 1,2-desaturation before cytochrome P450 monooxygenase P450-3, a 13-hydroxylase, hydroxylates GA7 to GA3, the final product of the GA-biosynthetic pathway. In Gibberella fujikuroi (strain CBS 195.34 / IMI 58289 / NRRL A-6831) (Bakanae and foot rot disease fungus), this protein is Cytochrome P450 monooygenase 3.